The sequence spans 250 residues: Coproheme decarboxylase (250 aa).

Residues Arg-131, Tyr-145–Lys-149, His-172, and Gln-185 contribute to the Fe-coproporphyrin III site. Tyr-145 is an active-site residue.

It belongs to the ChdC family. Type 1 subfamily. It depends on Fe-coproporphyrin III as a cofactor.

It catalyses the reaction Fe-coproporphyrin III + 2 H2O2 + 2 H(+) = heme b + 2 CO2 + 4 H2O. It carries out the reaction Fe-coproporphyrin III + H2O2 + H(+) = harderoheme III + CO2 + 2 H2O. The enzyme catalyses harderoheme III + H2O2 + H(+) = heme b + CO2 + 2 H2O. It functions in the pathway porphyrin-containing compound metabolism; protoheme biosynthesis. In terms of biological role, involved in coproporphyrin-dependent heme b biosynthesis. Catalyzes the decarboxylation of Fe-coproporphyrin III (coproheme) to heme b (protoheme IX), the last step of the pathway. The reaction occurs in a stepwise manner with a three-propionate intermediate. The protein is Coproheme decarboxylase of Staphylococcus aureus (strain USA300 / TCH1516).